The chain runs to 182 residues: Ribosome-recycling factor (182 aa).

The disordered stretch occupies residues 136–156 (VKKQEKDGDFSEDQSRDEQDS).

Belongs to the RRF family.

It localises to the cytoplasm. In terms of biological role, responsible for the release of ribosomes from messenger RNA at the termination of protein biosynthesis. May increase the efficiency of translation by recycling ribosomes from one round of translation to another. In Synechococcus sp. (strain CC9902), this protein is Ribosome-recycling factor.